The following is a 621-amino-acid chain: Glutathione-regulated potassium-efflux system protein KefC (621 aa).

12 helical membrane passes run 9-29 (ALIYLGAAALIVPIASVLGLG), 30-50 (SVLGYLIAGCIIGPWALRLVN), 54-74 (AILHFAEIGVVLMLVAMGLEL), 90-110 (GALQMVACGVLIGLFCMLLGL), 114-134 (VAELIGMTLALSSTAIAMQAM), 149-169 (FAVLLFQDIAAIPLVAMIPLL), 178-198 (LMAFALSALKVAAALALVVVL), 232-252 (LLLEEVGLSMAMGAFLAGVLL), 270-290 (GLLLGLFFIGVGMSIDFAPWS), 296-316 (IVILLVGFPAIKMLMLWLIAQ), 326-346 (RWFAVLLGQGSEFAFVVFGPA), and 359-379 (ALTLAVALSMATTPILLVLLT). The RCK N-terminal domain occupies 399–518 (QPRVIVAGFG…AGVEAPERET (120 aa)). The tract at residues 598–621 (GWQGTEEGRHTGDIADEPENKPSA) is disordered.

It belongs to the monovalent cation:proton antiporter 2 (CPA2) transporter (TC 2.A.37) family. KefC subfamily. In terms of assembly, homodimer. Interacts with the regulatory subunit KefF.

The protein localises to the cell inner membrane. Its function is as follows. Pore-forming subunit of a potassium efflux system that confers protection against electrophiles. Catalyzes K(+)/H(+) antiport. In Klebsiella aerogenes (Enterobacter aerogenes), this protein is Glutathione-regulated potassium-efflux system protein KefC.